A 197-amino-acid polypeptide reads, in one-letter code: Xanthine phosphoribosyltransferase (197 aa).

Positions 20 and 27 each coordinate xanthine. 128 to 132 (ANGQA) is a 5-phospho-alpha-D-ribose 1-diphosphate binding site. Lys-156 lines the xanthine pocket.

It belongs to the purine/pyrimidine phosphoribosyltransferase family. Xpt subfamily. As to quaternary structure, homodimer.

It is found in the cytoplasm. It carries out the reaction XMP + diphosphate = xanthine + 5-phospho-alpha-D-ribose 1-diphosphate. Its pathway is purine metabolism; XMP biosynthesis via salvage pathway; XMP from xanthine: step 1/1. Functionally, converts the preformed base xanthine, a product of nucleic acid breakdown, to xanthosine 5'-monophosphate (XMP), so it can be reused for RNA or DNA synthesis. This Bacillus cereus (strain B4264) protein is Xanthine phosphoribosyltransferase.